The following is a 185-amino-acid chain: UPF0397 protein AYWB_013 (185 aa).

5 consecutive transmembrane segments (helical) span residues 13 to 33 (IGLS…PVGF), 42 to 62 (AFLA…VGLI), 69 to 89 (FFLF…IGFI), 109 to 129 (IVYF…FFAP), and 148 to 168 (FLIV…LMTI).

Belongs to the UPF0397 family.

The protein resides in the cell membrane. The protein is UPF0397 protein AYWB_013 of Aster yellows witches'-broom phytoplasma (strain AYWB).